Reading from the N-terminus, the 1139-residue chain is Liprin-alpha (1139 aa).

4 coiled-coil regions span residues 30–144, 172–298, 329–517, and 655–701; these read PSDR…SLRM, EHHK…KNQI, IRDL…AQFQ, and QDAQ…EFYD. Disordered stretches follow at residues 700–720 and 764–847; these read YDDQ…LDNM and NQFD…DRRK. Composition is skewed to polar residues over residues 704–719 and 778–787; these read GIST…QLDN and PASSVASSTD. SAM domains are found at residues 867-933, 952-1016, and 1040-1109; these read WNGP…MVSL, NHEY…LKKV, and WSNE…LVND.

The protein belongs to the liprin family. Liprin-alpha subfamily. As to expression, detected in vulval muscle and other cells near the vulva; in neurons located in the lateral ganglion, posterior ganglion, ventral cord and lateral body; and in pharyngeal and body wall muscle cells.

The protein localises to the synapse. Its function is as follows. May play a role in regulating the structure of the neuronal region, called the active zone, from which synaptic vesicles send neurotransmitter signals across the synapse. This may be in association with the liprin-beta protein hlb-1. The protein is Liprin-alpha of Caenorhabditis elegans.